We begin with the raw amino-acid sequence, 194 residues long: 2,4-dinitrotoluene dioxygenase system, small oxygenase component (194 aa).

This sequence belongs to the bacterial ring-hydroxylating dioxygenase beta subunit family. The 2,4-dinitrotoluene dioxygenase (DNTDO) multicomponent enzyme system is composed of an electron transfer component and a dioxygenase component (iron sulfur protein (ISP)). The electron transfer component is composed of a ferredoxin reductase (DntAa) and a ferredoxin (DntAb), and the dioxygenase component is formed of a large alpha subunit (DntAc) and a small beta subunit (DntAd).

Component of the 2,4-dinitrotoluene dioxygenase (DNTDO) multicomponent enzyme system which catalyzes the incorporation of both atoms of molecular oxygen into 2,4-dinitrotoluene (DNT) to form 4-methyl-5-nitrocatechol (MNC) and nitrite. The beta subunit seems to have a structural role in the holoenzyme. Also able to convert naphthalene to cis-(1R,2S)-dihydroxy-1,2-dihydronaphthalene. The polypeptide is 2,4-dinitrotoluene dioxygenase system, small oxygenase component (Burkholderia sp. (strain RASC)).